Here is a 69-residue protein sequence, read N- to C-terminus: Conotoxin AbVIF (69 aa).

An N-terminal signal peptide occupies residues Val1–Ala17. The propeptide occupies Glu18–Ser40. Positions Ser20–Lys41 are disordered. Intrachain disulfides connect Cys43-Cys57, Cys50-Cys61, and Cys56-Cys68.

It belongs to the conotoxin O1 superfamily. In terms of tissue distribution, expressed by the venom duct.

It is found in the secreted. In Conus abbreviatus (Abbreviated cone), this protein is Conotoxin AbVIF.